Reading from the N-terminus, the 1093-residue chain is NACHT, LRR and PYD domains-containing protein 14 (1093 aa).

The region spanning 1 to 97 is the Pyrin domain; it reads MADSSSSSFF…CERAKEEINW (97 aa). The tract at residues 102–121 is disordered; sequence IGPDDAKAGETQEDQEAVLG. Residues 177-499 enclose the NACHT domain; the sequence is QIVVLQGAAG…MFYMLKGSWE (323 aa). An ATP-binding site is contributed by 183 to 190; sequence GAAGVGKT. LRR repeat units lie at residues 730 to 750, 759 to 780, 787 to 807, 816 to 836, 844 to 864, 873 to 894, 901 to 921, 930 to 951, 958 to 978, 987 to 1008, and 1015 to 1035; these read NLMH…KSLC, KLQT…NISN, SLIF…QLLC, YLER…EYLS, RLTH…KLMS, TLKS…YLST, SLTH…KLLC, NLQD…DLAS, NLRS…KILC, NIQR…DLSS, and RLIK…VKLY.

It belongs to the NLRP family. Testis-specific.

Its subcellular location is the cytoplasm. Functionally, may be involved in inflammation and spermatogenesis. The protein is NACHT, LRR and PYD domains-containing protein 14 (NLRP14) of Homo sapiens (Human).